A 236-amino-acid chain; its full sequence is Probable metal transport system ATP-binding protein CT_416 (236 aa).

The region spanning 5–236 (MLLENVSFRY…FCCNTFGRCP (232 aa)) is the ABC transporter domain. 39–46 (GPNGGGKT) is an ATP binding site.

This sequence belongs to the ABC transporter superfamily.

It is found in the cell inner membrane. Part of an ATP-driven transport system CT_415/CT_416/CT_417 for a metal. Probably responsible for energy coupling to the transport system. This is Probable metal transport system ATP-binding protein CT_416 from Chlamydia trachomatis serovar D (strain ATCC VR-885 / DSM 19411 / UW-3/Cx).